The following is a 1369-amino-acid chain: DNA-directed RNA polymerase subunit beta' (1369 aa).

Positions 1–26 (MTSSSPKTRKSSTKSKAKRGSKSKKA) are disordered. Basic residues predominate over residues 7-24 (KTRKSSTKSKAKRGSKSK). C253, C320, C327, and C330 together coordinate Zn(2+). The segment at 1294-1369 (TVDMPSSPVA…LQEEGLLSDE (76 aa)) is disordered. A compositionally biased stretch (acidic residues) spans 1342 to 1351 (DDELSAEDQM). Low complexity predominate over residues 1357-1369 (LEGLQEEGLLSDE).

It belongs to the RNA polymerase beta' chain family. RpoC2 subfamily. As to quaternary structure, in cyanobacteria the RNAP catalytic core is composed of 2 alpha, 1 beta, 1 beta', 1 gamma and 1 omega subunit. When a sigma factor is associated with the core the holoenzyme is formed, which can initiate transcription. It depends on Zn(2+) as a cofactor.

The enzyme catalyses RNA(n) + a ribonucleoside 5'-triphosphate = RNA(n+1) + diphosphate. In terms of biological role, DNA-dependent RNA polymerase catalyzes the transcription of DNA into RNA using the four ribonucleoside triphosphates as substrates. The sequence is that of DNA-directed RNA polymerase subunit beta' from Prochlorococcus marinus (strain NATL2A).